We begin with the raw amino-acid sequence, 224 residues long: Ribonuclease HII (224 aa).

The region spanning 17–201 (GTVIGVDEAG…VLSNLSVKKV (185 aa)) is the RNase H type-2 domain. Residues Asp23, Glu24, and Asp111 each contribute to the a divalent metal cation site.

This sequence belongs to the RNase HII family. It depends on Mn(2+) as a cofactor. Mg(2+) is required as a cofactor.

The protein resides in the cytoplasm. It catalyses the reaction Endonucleolytic cleavage to 5'-phosphomonoester.. Endonuclease that specifically degrades the RNA of RNA-DNA hybrids. The chain is Ribonuclease HII from Pseudothermotoga lettingae (strain ATCC BAA-301 / DSM 14385 / NBRC 107922 / TMO) (Thermotoga lettingae).